Here is a 460-residue protein sequence, read N- to C-terminus: Cyclin-A1-1 (460 aa).

Disordered regions lie at residues methionine 1–glutamine 52 and proline 95–glutamine 126. Composition is skewed to low complexity over residues serine 10–serine 19 and serine 100–serine 111.

This sequence belongs to the cyclin family. Cyclin AB subfamily. In terms of assembly, interacts with FZR2/CCS52A1, FZR1/CCS52A2 and FZR3/CCS52B.

The protein is Cyclin-A1-1 (CYCA1-1) of Arabidopsis thaliana (Mouse-ear cress).